The sequence spans 149 residues: 18 kDa antigen 1 (149 aa).

The region spanning 21 to 131 is the sHSP domain; it reads TAARPAVMPM…KPRKIAVGRG (111 aa).

This sequence belongs to the small heat shock protein (HSP20) family.

Its function is as follows. Not known. This protein is one of the major immune reactive proteins in mycobacteria. The sequence is that of 18 kDa antigen 1 from Mycobacterium intracellulare.